A 413-amino-acid chain; its full sequence is Multifunctional CCA protein (413 aa).

ATP contacts are provided by G8 and R11. CTP contacts are provided by G8 and R11. D21 and D23 together coordinate Mg(2+). Residues R91, R137, and R140 each coordinate ATP. Residues R91, R137, and R140 each contribute to the CTP site. In terms of domain architecture, HD spans 228-329 (TGLHTLMTVT…VKLFDSIDAW (102 aa)).

It belongs to the tRNA nucleotidyltransferase/poly(A) polymerase family. Bacterial CCA-adding enzyme type 1 subfamily. Monomer. Can also form homodimers and oligomers. It depends on Mg(2+) as a cofactor. Ni(2+) serves as cofactor.

The enzyme catalyses a tRNA precursor + 2 CTP + ATP = a tRNA with a 3' CCA end + 3 diphosphate. The catalysed reaction is a tRNA with a 3' CCA end + 2 CTP + ATP = a tRNA with a 3' CCACCA end + 3 diphosphate. Its function is as follows. Catalyzes the addition and repair of the essential 3'-terminal CCA sequence in tRNAs without using a nucleic acid template. Adds these three nucleotides in the order of C, C, and A to the tRNA nucleotide-73, using CTP and ATP as substrates and producing inorganic pyrophosphate. tRNA 3'-terminal CCA addition is required both for tRNA processing and repair. Also involved in tRNA surveillance by mediating tandem CCA addition to generate a CCACCA at the 3' terminus of unstable tRNAs. While stable tRNAs receive only 3'-terminal CCA, unstable tRNAs are marked with CCACCA and rapidly degraded. The sequence is that of Multifunctional CCA protein from Klebsiella pneumoniae (strain 342).